The chain runs to 145 residues: Basic phospholipase A2 Vb-2 (145 aa).

The first 19 residues, 1–19 (MNPAHLLVLLAVCVSLLGA), serve as a signal peptide directing secretion. A propeptide spanning residues 20–27 (ANIPPQPL) is cleaved from the precursor. 7 disulfide bridges follow: Cys38-Cys97, Cys52-Cys144, Cys54-Cys70, Cys69-Cys125, Cys76-Cys118, Cys86-Cys111, and Cys104-Cys116. Ca(2+) contacts are provided by Tyr53, Gly55, and Gly57. His73 is a catalytic residue. A Ca(2+)-binding site is contributed by Asp74. The active site involves Asp119.

Ca(2+) is required as a cofactor. Expressed by the venom gland.

Its subcellular location is the secreted. It carries out the reaction a 1,2-diacyl-sn-glycero-3-phosphocholine + H2O = a 1-acyl-sn-glycero-3-phosphocholine + a fatty acid + H(+). Snake venom phospholipase A2 (PLA2) that has only a weak enzymatic activity. Inhibits neuromuscular transmission by blocking acetylcholine release from the nerve termini. PLA2 catalyzes the calcium-dependent hydrolysis of the 2-acyl groups in 3-sn-phosphoglycerides. This Bungarus fasciatus (Banded krait) protein is Basic phospholipase A2 Vb-2.